Here is a 149-residue protein sequence, read N- to C-terminus: Nucleoside diphosphate kinase 1 (149 aa).

ATP contacts are provided by K9, F57, R85, T91, R102, and N112. Catalysis depends on H115, which acts as the Pros-phosphohistidine intermediate.

The protein belongs to the NDK family. In terms of assembly, homohexamer. Can also form dodecamers. Mg(2+) is required as a cofactor.

It localises to the nucleus. The catalysed reaction is a 2'-deoxyribonucleoside 5'-diphosphate + ATP = a 2'-deoxyribonucleoside 5'-triphosphate + ADP. The enzyme catalyses a ribonucleoside 5'-diphosphate + ATP = a ribonucleoside 5'-triphosphate + ADP. In terms of biological role, major role in the synthesis of nucleoside triphosphates other than ATP. The ATP gamma phosphate is transferred to the NDP beta phosphate via a ping-pong mechanism, using a phosphorylated active-site intermediate. Involved in transcription regulation. Has G-quadruplex (G4) DNA-binding activity, which is independent of its nucleotide-binding and kinase activity. Binds folded G4 with low nanomolar affinity and corresponding unfolded G-rich DNA more weakly. Stabilizes folded G4s regardless of whether they are prefolded or not. The sequence is that of Nucleoside diphosphate kinase 1 from Zea mays (Maize).